Reading from the N-terminus, the 204-residue chain is NADH-quinone oxidoreductase subunit C (204 aa).

This sequence belongs to the complex I 30 kDa subunit family. As to quaternary structure, NDH-1 is composed of 14 different subunits. Subunits NuoB, C, D, E, F, and G constitute the peripheral sector of the complex.

It is found in the cell inner membrane. The enzyme catalyses a quinone + NADH + 5 H(+)(in) = a quinol + NAD(+) + 4 H(+)(out). In terms of biological role, NDH-1 shuttles electrons from NADH, via FMN and iron-sulfur (Fe-S) centers, to quinones in the respiratory chain. The immediate electron acceptor for the enzyme in this species is believed to be ubiquinone. Couples the redox reaction to proton translocation (for every two electrons transferred, four hydrogen ions are translocated across the cytoplasmic membrane), and thus conserves the redox energy in a proton gradient. This is NADH-quinone oxidoreductase subunit C from Polaromonas naphthalenivorans (strain CJ2).